The sequence spans 805 residues: Leucine--tRNA ligase (805 aa).

Residues 40 to 51 (PYPSGQGLHVGH) carry the 'HIGH' region motif. Residues 576–580 (KMSKS) carry the 'KMSKS' region motif. Lysine 579 lines the ATP pocket.

It belongs to the class-I aminoacyl-tRNA synthetase family.

It is found in the cytoplasm. The catalysed reaction is tRNA(Leu) + L-leucine + ATP = L-leucyl-tRNA(Leu) + AMP + diphosphate. The polypeptide is Leucine--tRNA ligase (Ligilactobacillus salivarius (strain UCC118) (Lactobacillus salivarius)).